The sequence spans 37 residues: Large ribosomal subunit protein bL36 (37 aa).

Belongs to the bacterial ribosomal protein bL36 family.

The sequence is that of Large ribosomal subunit protein bL36 from Nitratiruptor sp. (strain SB155-2).